An 829-amino-acid chain; its full sequence is DNA topoisomerase 1 (829 aa).

Residues 1-248 form a disordered region; the sequence is MSEDHVQNDS…AKGNEEGVKK (248 aa). Residues 22–36 are compositionally biased toward basic residues; it reads HKHKKDKEHRHKEHK. Composition is skewed to basic and acidic residues over residues 37–58, 68–159, and 193–220; these read KDKD…SEKK, KHRE…EKMK, and KENK…DDKK. Interaction with DNA regions lie at residues 481–482, 544–549, and 641–643; these read KY, RAGNEK, and TAK. The region spanning 488–821 is the Topo IB-type catalytic domain; that stretch reads SSRIKGEKDW…SIWQTTTSNF (334 aa). The active-site O-(3'-phospho-DNA)-tyrosine intermediate is Tyr-779.

The protein belongs to the type IB topoisomerase family. As to quaternary structure, monomer.

The protein resides in the nucleus. It catalyses the reaction ATP-independent breakage of single-stranded DNA, followed by passage and rejoining.. Its function is as follows. Releases the supercoiling and torsional tension of DNA introduced during the DNA replication and transcription by transiently cleaving and rejoining one strand of the DNA duplex. Introduces a single-strand break via transesterification at a target site in duplex DNA. The scissile phosphodiester is attacked by the catalytic tyrosine of the enzyme, resulting in the formation of a DNA-(3'-phosphotyrosyl)-enzyme intermediate and the expulsion of a 5'-OH DNA strand. TThe free DNA strand then rotates around the intact phosphodiester bond on the opposing strand, thus removing DNA supercoils. Finally, in the religation step, the DNA 5'-OH attacks the covalent intermediate to expel the active-site tyrosine and restore the DNA phosphodiester backbone. May play a role in the circadian transcription of the core circadian clock component BMAL1. This chain is DNA topoisomerase 1 (top1), found in Xenopus laevis (African clawed frog).